Reading from the N-terminus, the 635-residue chain is Cerevisin (635 aa).

A signal peptide spans 1–19 (MKLENTLFTLGALGSISAA). Residues 20–280 (LVIPNLENAA…VERDSIVEAT (261 aa)) constitute a propeptide that is removed on maturation. Composition is skewed to basic and acidic residues over residues 35–50 (INKE…VEFT), 74–85 (KGQDKESPEFNG), 94–109 (SAHE…HESS), and 126–136 (GCHENKVEEKK). Residues 35–155 (INKEDHHERP…KHHEKTLEKG (121 aa)) form a disordered region. A compositionally biased stretch (basic residues) spans 137-155 (MKGKKVKGKKHHEKTLEKG). In terms of domain architecture, Inhibitor I9 spans 182 to 278 (RYIIVFKRGA…DFVERDSIVE (97 aa)). A Peptidase S8 domain is found at 289–614 (PWGLARISHR…KQELNMDEFI (326 aa)). Active-site charge relay system residues include aspartate 325 and histidine 357. Cysteines 460 and 491 form a disulfide. Residue serine 519 is the Charge relay system of the active site. Residues 575 to 635 (DTPNVLIYNG…RDILDKLNII (61 aa)) constitute a propeptide that is removed on maturation. The N-linked (GlcNAc...) asparagine glycan is linked to asparagine 594.

Belongs to the peptidase S8 family. Activated by N- and C-terminal proteolytic cleavage. Protease B (PrB/PRB1) processing requires at least 4 cleavages. First, the signal peptide is removed from the 76 kDa preproprotease B by signal peptidase in the ER. Then, PrB removes its own Pro-region (in trans) at the N-terminus, producing a 39 kDa form before exiting the ER. In the Golgi complex, the C-terminal Post-region of the 40 kDa proprotease B undergoes protease A (PrA/PEP4)-mediated processing to a 37 kDa intermediate, which in turn is quickly processed again by PrB in trans to yield the 31 kDa mature PrB. Post-translationally, glycosylated. Preproprotease B is a 76 kDa unglycosylated precursor that enters the endoplasmic reticulum (ER), where it receives one Asn-linked and an undetermined number of non-Asn-linked carbohydrate side chains. In the Golgi complex, the 39 kDa form becomes 40 kDa, due to elaboration of the Asn-linked side chain. The ultimate processing step removes a peptide containing the Asn-linked chain. Mature PrB has only non-Asn-linked carbohydrates.

It localises to the vacuole. The enzyme catalyses Hydrolysis of proteins with broad specificity, and of Bz-Arg-OEt &gt; Ac-Tyr-OEt. Does not hydrolyze peptide amides.. Vacuolar proteinase B involved in protein degradation in the vacuole. Among other substrates, acts on carboxypeptidase Y (cpY/PRC1) to activate it by processing its Pro-peptide. Required for meiosis and spore formation, and for optimal survival in stationary phase. The sequence is that of Cerevisin (PRB1) from Saccharomyces cerevisiae (strain ATCC 204508 / S288c) (Baker's yeast).